The following is a 200-amino-acid chain: Recombination protein RecR (200 aa).

The C4-type zinc-finger motif lies at 60–75 (CVYCQALTEDDVCNIC). A Toprim domain is found at 83–177 (TKLCIIESML…KISRIGFGVP (95 aa)).

It belongs to the RecR family.

Its function is as follows. May play a role in DNA repair. It seems to be involved in an RecBC-independent recombinational process of DNA repair. It may act with RecF and RecO. In Francisella tularensis subsp. novicida (strain U112), this protein is Recombination protein RecR.